Consider the following 706-residue polypeptide: GDNF-inducible zinc finger protein 1 (706 aa).

Residues 31–103 (CDVTVSIENQ…VYTAKVRVEE (73 aa)) enclose the BTB domain. A compositionally biased stretch (polar residues) spans 149 to 165 (VEASSGPQVSVTPSSKA). 2 disordered regions span residues 149–220 (VEAS…PKIR) and 242–308 (RRLR…KDGE). Composition is skewed to basic and acidic residues over residues 197–212 (PSKKCKEKLDKKKDVA) and 242–277 (RRLREQQKSAEEAAENDKCPQDQSPDNERMETEPAA). C2H2-type zinc fingers lie at residues 315–337 (FQCTVCDKAFLYEKSFLKHIKYH), 346–369 (YRCDTCGQTFANRCNLKSHQRHVH), 375–398 (FPCEMCAKKFKRKKDVKRHVLQVH), 405–427 (HRCGQCGKGLSSKTALRLHERTH), 433–455 (YGCTKCDAKFSQPSALKTHLRVH), 461–483 (FVCDECGARFTQNHMLIYHKRCH), 489–511 (FMCETCGKSFASKEYLKHHNRIH), 517–539 (FKCEVCLRTFAQRNSLYQHIKVH), 545–567 (YCCDQCGKQFTQVNALQRHHRIH), and 573–595 (YMCNACGRTFTDKSTLRRHTSIH). Serine 611 is subject to Phosphoserine.

This sequence belongs to the krueppel C2H2-type zinc-finger protein family. In terms of assembly, interacts with NCL. In terms of tissue distribution, expressed in several tissues, with highest levels in liver. Also expressed in embryos from 7 to 17 dpc.

It is found in the nucleus. Its subcellular location is the cytoplasm. The protein localises to the nucleolus. Its function is as follows. Transcriptional repressor that binds the GZF1 responsive element (GRE) (consensus: 5'-TGCGCN[TG][CA]TATA-3'). May be regulating VSX2/HOX10 expression. The sequence is that of GDNF-inducible zinc finger protein 1 from Mus musculus (Mouse).